The following is a 628-amino-acid chain: Netrin-4 (628 aa).

A signal peptide spans 1 to 19 (MGSCARLLLLWGCSAVAAG). A Laminin N-terminal domain is found at 30–261 (CEKACNPRMG…AVYDFIVKGS (232 aa)). Residues asparagine 56 and asparagine 163 are each glycosylated (N-linked (GlcNAc...) asparagine). 12 disulfides stabilise this stretch: cysteine 262–cysteine 271, cysteine 264–cysteine 293, cysteine 295–cysteine 304, cysteine 307–cysteine 329, cysteine 332–cysteine 341, cysteine 334–cysteine 359, cysteine 362–cysteine 371, cysteine 374–cysteine 392, cysteine 395–cysteine 413, cysteine 397–cysteine 420, cysteine 422–cysteine 431, and cysteine 434–cysteine 446. 3 consecutive Laminin EGF-like domains span residues 262–331 (CFCN…ECRT), 332–394 (CKCN…ACKA), and 395–448 (CSCH…GCRP). The N-linked (GlcNAc...) asparagine glycan is linked to asparagine 353. The N-linked (GlcNAc...) asparagine glycan is linked to asparagine 483. Intrachain disulfides connect cysteine 506-cysteine 576 and cysteine 520-cysteine 627. One can recognise an NTR domain in the interval 506-627 (CECKEQVLGN…RVMHILKRDC (122 aa)).

As to quaternary structure, may form a homodimer. In terms of tissue distribution, expressed in kidney, liver, heart, ovary, testis, retina, brain, olfactory bulb, and widely expressed in embryo.

The protein resides in the secreted. Its subcellular location is the extracellular space. It localises to the extracellular matrix. The protein localises to the basement membrane. May play an important role in neural, kidney and vascular development. Promotes neurite elongation from olfactory bulb explants. This is Netrin-4 (Ntn4) from Mus musculus (Mouse).